Consider the following 435-residue polypeptide: Cyclin-dependent kinase 15 (435 aa).

A Protein kinase domain is found at 103–387; it reads YLNLEKLGEG…AQEALVHDYF (285 aa). Residues 109–117 and K132 contribute to the ATP site; that span reads LGEGSYATV. D224 acts as the Proton acceptor in catalysis.

Belongs to the protein kinase superfamily. CMGC Ser/Thr protein kinase family. CDC2/CDKX subfamily. Mg(2+) serves as cofactor.

It catalyses the reaction L-seryl-[protein] + ATP = O-phospho-L-seryl-[protein] + ADP + H(+). It carries out the reaction L-threonyl-[protein] + ATP = O-phospho-L-threonyl-[protein] + ADP + H(+). Serine/threonine-protein kinase that acts like an antiapoptotic protein that counters TRAIL/TNFSF10-induced apoptosis by inducing phosphorylation of BIRC5 at 'Thr-34'. This is Cyclin-dependent kinase 15 (CDK15) from Homo sapiens (Human).